Here is a 1308-residue protein sequence, read N- to C-terminus: Cadherin-related family member 2 (1308 aa).

The signal sequence occupies residues Met-1–Ala-20. Residues Asn-21–Ser-1152 are Extracellular-facing. 9 consecutive Cadherin domains span residues Val-33 to Phe-124, Leu-125 to Phe-241, Ile-242 to Phe-353, Ala-368 to Phe-480, Ser-481 to Val-586, Val-586 to Phe-695, Phe-695 to Leu-807, Ala-809 to Phe-927, and Pro-929 to Phe-1051. Residues Val-1153–Val-1173 traverse the membrane as a helical segment. The Cytoplasmic portion of the chain corresponds to Cys-1174–Leu-1308. The tract at residues Ser-1178–Leu-1308 is mediates interaction with USH1C and MYO7B and is required for proper localization to microvilli tips and function in microvilli organization. Ser-1245 is subject to Phosphoserine. Positions Val-1251–Leu-1308 are disordered. Over residues Met-1255–Pro-1266 the composition is skewed to basic and acidic residues. The span at Ala-1288–Leu-1308 shows a compositional bias: polar residues. Ser-1297 is subject to Phosphoserine.

In terms of assembly, part of the IMAC/intermicrovillar adhesion complex/intermicrovillar tip-link complex composed of ANKS4B, MYO7B, USH1C, CDHR2 and CDHR5. Interacts with MAST2. Interacts (via cytoplasmic domain) with USH1C and MYO7B; required for proper localization of CDHR2 to microvilli tips and its function in brush border differentiation.

Its subcellular location is the apical cell membrane. The protein resides in the cell projection. The protein localises to the microvillus membrane. It is found in the cell junction. In terms of biological role, intermicrovillar adhesion molecule that forms, via its extracellular domain, calcium-dependent heterophilic complexes with CDHR5 on adjacent microvilli. Thereby, controls the packing of microvilli at the apical membrane of epithelial cells. Through its cytoplasmic domain, interacts with microvillus cytoplasmic proteins to form the intermicrovillar adhesion complex/IMAC. This complex plays a central role in microvilli and epithelial brush border differentiation. May also play a role in cell-cell adhesion and contact inhibition in epithelial cells. The polypeptide is Cadherin-related family member 2 (Mus musculus (Mouse)).